The chain runs to 91 residues: Small ribosomal subunit protein uS19 (91 aa).

Belongs to the universal ribosomal protein uS19 family.

In terms of biological role, protein S19 forms a complex with S13 that binds strongly to the 16S ribosomal RNA. This Pseudomonas paraeruginosa (strain DSM 24068 / PA7) (Pseudomonas aeruginosa (strain PA7)) protein is Small ribosomal subunit protein uS19.